The sequence spans 667 residues: Tripartite terminase subunit 3 (667 aa).

The short motif at 208-215 (VPRRHGKT) is the Walker A motif element. Positions 301–306 (LLIVDE) match the Walker B motif motif. Residue Glu306 is the For ATPase activity of the active site. Residues Asp459, Glu530, and Asp644 each act as for nuclease activity in the active site.

Belongs to the herpesviridae TRM3 protein family. As to quaternary structure, interacts with the terminase subunits TRM1 and TRM2. Interacts with portal protein.

The protein resides in the host nucleus. Component of the molecular motor that translocates viral genomic DNA in empty capsid during DNA packaging. Forms a tripartite terminase complex together with TRM1 and TRM2 in the host cytoplasm. Once the complex reaches the host nucleus, it interacts with the capsid portal vertex. This portal forms a ring in which genomic DNA is translocated into the capsid. TRM3 carries an RNase H-like nuclease activity that plays an important role for the cleavage of concatemeric viral DNA into unit length genomes. This chain is Tripartite terminase subunit 3, found in Human herpesvirus 6A (strain Uganda-1102) (HHV-6 variant A).